The sequence spans 510 residues: Hydroperoxide bicyclase CYP5164A3, mitochondrial (510 aa).

Residues 1-31 (MQRVGAASPTCSSLQAPAAAPPILTISPHHR) constitute a mitochondrion transit peptide. Cysteine 452 is a binding site for heme.

The protein belongs to the cytochrome P450 family. It depends on heme as a cofactor.

The protein localises to the mitochondrion. It carries out the reaction (13S)-hydroperoxy-(9Z,11E,15Z)-octadecatrienoate = plasmodiophorol A. The enzyme catalyses (13S)-hydroperoxy-(9Z,11E,15Z)-octadecatrienoate = plasmodiophorol B. The catalysed reaction is (13S)-hydroperoxy-(9Z,11E,15Z)-octadecatrienoate = ectocarpin A + H2O. It catalyses the reaction (15S)-hydroperoxy-(5Z,8Z,11Z,13E,17Z)-eicosapentaenoate = ectocarpin B + H2O. It carries out the reaction (15S)-hydroperoxy-(5Z,8Z,11Z,13E,17Z)-eicosapentaenoate = ectocarpin C. The enzyme catalyses (15S)-hydroperoxy-(5Z,8Z,11Z,13E,17Z)-eicosapentaenoate + H2O = ectocarpin D. The catalysed reaction is (15S)-hydroperoxy-(5Z,8Z,11Z,13E,17Z)-eicosapentaenoate = 14-oxo-15-hydroxy-(5Z,8Z,11Z,17Z)-eicosatetraenoate. It participates in lipid metabolism; oxylipin biosynthesis. Its function is as follows. Cytochrome P450 hydroperoxide bicyclase involved in the metabolism of oxylipins 'ectocarpins' natural products, such as hybridalactone, ecklonilactones and derivatives. Isomerizes the hydroperoxides into epoxyalcohols via epoxyallylic radical. Can use alpha-linolenic acid 13(S)-hydroperoxide (13-HPOTE) and eicosapentaenoic acid 15(S)-hydroperoxide (15-HPEPE) as preferred substrate to produce corresponding heterobicyclic oxylipins, such as plasmodiophorol A (6-oxabicyclo[3.1.0]hexane), plasmodiophorol B (2-oxabicyclo[2.2.1]heptane) and plasmodiophorol C (4-hydroxymethyl-1,2-dihydroxycyclopentane) as well as ectocarpin A (3-propenyl-6-oxabicyclo[3.1.0]hexane) formed at about 15:3:3:1 ratio for 13-HPOTE, and analogous to plasmodiophorols A and B including ectocarpin B (3-[(1'E)-propenyl]-6-oxabicyclo[3.1.0]hexane), ectocarpin C, 14-oxo-15-hydroxy-5,8,11,17-eicosate-traenoic acid and ectocarpin D for 15-HPEPE. Barely able to use linoleic acid 13-hydroperoxide (13-HPODE), linoleic acid 9-hydroperoxide (9-HPODE), eicosapentaenoic acid 15-hydroperoxide (15-HPEPE), and alpha-linolenic acid 9-hydroperoxide (9-HPOTE) as substrates. The polypeptide is Hydroperoxide bicyclase CYP5164A3, mitochondrial (Ectocarpus siliculosus (Brown alga)).